Here is a 362-residue protein sequence, read N- to C-terminus: Salactin (362 aa).

Acidic residues predominate over residues 1–10; the sequence is MSDDTEDDSG. The disordered stretch occupies residues 1-28; sequence MSDDTEDDSGGESTADMEFGEQPAPLGV.

In terms of assembly, forms dynamically unstable filaments. Monomers are added at the growing filament end. In vitro, salactin polymerizes in the presence of ATP and AMP-PNP but not in the presence of ADP, GTP, ATPgammaS or buffer alone.

It localises to the cytoplasm. In terms of biological role, actin homolog which might be involved in partitioning DNA between daughter cells when chromosomal copy number is low. In Halobacterium salinarum (strain ATCC 700922 / JCM 11081 / NRC-1) (Halobacterium halobium), this protein is Salactin.